We begin with the raw amino-acid sequence, 740 residues long: Polyribonucleotide nucleotidyltransferase (740 aa).

The Mg(2+) site is built by aspartate 492 and aspartate 498. Positions 559–618 constitute a KH domain; that stretch reads PMVQTLEIQKEKIRDVIGLGGKVIKELCKTFDVEIDISENGEVKVWGNVGENVKKAVQSI. The 69-residue stretch at 628–696 folds into the S1 motif domain; it reads GDIFDGEVVK…HKNRVKLTLR (69 aa).

The protein belongs to the polyribonucleotide nucleotidyltransferase family. Mg(2+) is required as a cofactor.

The protein resides in the cytoplasm. It catalyses the reaction RNA(n+1) + phosphate = RNA(n) + a ribonucleoside 5'-diphosphate. Functionally, involved in mRNA degradation. Catalyzes the phosphorolysis of single-stranded polyribonucleotides processively in the 3'- to 5'-direction. The polypeptide is Polyribonucleotide nucleotidyltransferase (Orientia tsutsugamushi (strain Boryong) (Rickettsia tsutsugamushi)).